We begin with the raw amino-acid sequence, 506 residues long: Radiation-sensitive protein 28 (506 aa).

5 WD repeats span residues 55–94 (PLSI…HRND), 193–233 (HHKY…AVQD), 285–325 (RMQS…RLYS), 357–396 (AHLR…LQPE), and 404–451 (LGTQ…LWNK).

Its subcellular location is the nucleus. In terms of biological role, involved in transcription-coupled repair nucleotide excision repair (NER) of UV-induced DNA lesions. This is Radiation-sensitive protein 28 (RAD28) from Saccharomyces cerevisiae (strain ATCC 204508 / S288c) (Baker's yeast).